The primary structure comprises 289 residues: 33 kDa chaperonin (289 aa).

2 disulfides stabilise this stretch: C225-C227 and C258-C261.

Belongs to the HSP33 family. Post-translationally, under oxidizing conditions two disulfide bonds are formed involving the reactive cysteines. Under reducing conditions zinc is bound to the reactive cysteines and the protein is inactive.

The protein localises to the cytoplasm. Functionally, redox regulated molecular chaperone. Protects both thermally unfolding and oxidatively damaged proteins from irreversible aggregation. Plays an important role in the bacterial defense system toward oxidative stress. The chain is 33 kDa chaperonin from Nitrosococcus oceani (strain ATCC 19707 / BCRC 17464 / JCM 30415 / NCIMB 11848 / C-107).